We begin with the raw amino-acid sequence, 244 residues long: Mast cell protease 2 (244 aa).

Residues 1 to 18 (MQALLFLMALLLPSGAGA) form the signal peptide. A propeptide spans 19 to 20 (EE) (activation peptide). Residues 21 to 242 (IIGGVEAKPH…YLPWIYKVLK (222 aa)) enclose the Peptidase S1 domain. N-linked (GlcNAc...) asparagine glycosylation is present at N44. C50 and C66 are joined by a disulfide. Catalysis depends on charge relay system residues H65 and D109. 2 disulfides stabilise this stretch: C143–C208 and C174–C187. Residue S202 is the Charge relay system of the active site.

Belongs to the peptidase S1 family. Granzyme subfamily. In terms of tissue distribution, mucosal mast cells.

The chain is Mast cell protease 2 (Mcpt2) from Mus musculus (Mouse).